The primary structure comprises 74 residues: Small heat shock protein hspG10 (74 aa).

Residues 31 to 74 (KTIIDILPSMDVTMTNDKLIIETELAGISKDHIEIDIKDSILTI) enclose the sHSP domain.

This sequence belongs to the small heat shock protein (HSP20) family.

The polypeptide is Small heat shock protein hspG10 (hspG10) (Dictyostelium discoideum (Social amoeba)).